A 282-amino-acid polypeptide reads, in one-letter code: tRNA pseudouridine synthase B (282 aa).

Catalysis depends on Asp-39, which acts as the Nucleophile.

This sequence belongs to the pseudouridine synthase TruB family. Type 1 subfamily.

It carries out the reaction uridine(55) in tRNA = pseudouridine(55) in tRNA. In terms of biological role, responsible for synthesis of pseudouridine from uracil-55 in the psi GC loop of transfer RNAs. The polypeptide is tRNA pseudouridine synthase B (Borreliella burgdorferi (strain ATCC 35210 / DSM 4680 / CIP 102532 / B31) (Borrelia burgdorferi)).